Here is a 172-residue protein sequence, read N- to C-terminus: 3-hydroxydecanoyl-[acyl-carrier-protein] dehydratase (172 aa).

His71 is an active-site residue.

Belongs to the thioester dehydratase family. FabA subfamily. In terms of assembly, homodimer.

The protein localises to the cytoplasm. It carries out the reaction a (3R)-hydroxyacyl-[ACP] = a (2E)-enoyl-[ACP] + H2O. It catalyses the reaction (3R)-hydroxydecanoyl-[ACP] = (2E)-decenoyl-[ACP] + H2O. The catalysed reaction is (2E)-decenoyl-[ACP] = (3Z)-decenoyl-[ACP]. Its pathway is lipid metabolism; fatty acid biosynthesis. In terms of biological role, necessary for the introduction of cis unsaturation into fatty acids. Catalyzes the dehydration of (3R)-3-hydroxydecanoyl-ACP to E-(2)-decenoyl-ACP and then its isomerization to Z-(3)-decenoyl-ACP. Can catalyze the dehydratase reaction for beta-hydroxyacyl-ACPs with saturated chain lengths up to 16:0, being most active on intermediate chain length. The sequence is that of 3-hydroxydecanoyl-[acyl-carrier-protein] dehydratase from Vibrio vulnificus (strain CMCP6).